Consider the following 240-residue polypeptide: Probable transcriptional regulatory protein OEOE_0768 (240 aa).

The interval 1–21 (MSGHSKWHNIQGRKNAQDAKR) is disordered.

The protein belongs to the TACO1 family.

Its subcellular location is the cytoplasm. The polypeptide is Probable transcriptional regulatory protein OEOE_0768 (Oenococcus oeni (strain ATCC BAA-331 / PSU-1)).